The sequence spans 57 residues: Orphan toxin OrtT (57 aa).

2 helical membrane passes run 6 to 26 (HMLV…WFLS) and 34 to 54 (FLSA…ALLF).

Belongs to the GhoT/OrtT toxin family.

Its subcellular location is the cell inner membrane. Acts as an orphan toxin which is important for maintaining cell fitness during stress related to the stringent response. Increases the formation of persister cells. Has no known antitoxin. This is Orphan toxin OrtT from Escherichia coli O6:H1 (strain CFT073 / ATCC 700928 / UPEC).